The sequence spans 278 residues: Putative non-heme haloperoxidase (278 aa).

The AB hydrolase-1 domain occupies 24–240; the sequence is PLVFLHGLSV…STAKITNASF (217 aa). Residues Ser-97 and Asp-221 contribute to the active site.

This sequence belongs to the AB hydrolase superfamily.

The protein is Putative non-heme haloperoxidase (59.2) of Mycobacterium (Mycobacteriophage D29).